A 227-amino-acid polypeptide reads, in one-letter code: MDTMIHRTRIKICGLTRAEDMQDALAAGADAIGFVFYARSPRYIAPDAAAQLIAQLPPFVSAVGLFVNAGVEEVQAVVAQTSIALLQFHGDETVTECAAIAAAVNRPFIRAIRVKPDTSAADLLKYESDYRAASRLFAGLLLDTYVDSYGGSGKVFDWSLIPANIAPRVVLSGGLSAQNATDAVQRIRPYAVDVSSGVERDKGIKDVAKINAFIAAVRVADAALQSK.

Belongs to the TrpF family.

It carries out the reaction N-(5-phospho-beta-D-ribosyl)anthranilate = 1-(2-carboxyphenylamino)-1-deoxy-D-ribulose 5-phosphate. It participates in amino-acid biosynthesis; L-tryptophan biosynthesis; L-tryptophan from chorismate: step 3/5. The protein is N-(5'-phosphoribosyl)anthranilate isomerase of Herminiimonas arsenicoxydans.